A 354-amino-acid polypeptide reads, in one-letter code: Galectin-9 (354 aa).

Galectin domains are found at residues 17-147 (FTGI…INFQ) and 226-354 (FFTS…HVQT). A beta-D-galactoside-binding positions include Asn-47, His-60, Arg-64, Asn-74, 81-87 (WGPEERK), His-266, Arg-270, Thr-280, and 286-292 (WGPEERS).

In terms of tissue distribution, the isoform Long is expressed exclusively in the small intestine.

It is found in the cytoplasm. Its subcellular location is the nucleus. The protein localises to the secreted. Its function is as follows. Binds galactosides. Has high affinity for the Forssman pentasaccharide. Ligand for HAVCR2/TIM3. Binding to HAVCR2 induces T-helper type 1 lymphocyte (Th1) death. Also stimulates bactericidal activity in infected macrophages by causing macrophage activation and IL1B secretion which restricts intracellular bacterial growth. Ligand for P4HB; the interaction retains P4HB at the cell surface of Th2 T helper cells, increasing disulfide reductase activity at the plasma membrane, altering the plasma membrane redox state and enhancing cell migration. Ligand for CD44; the interaction enhances binding of SMAD3 to the FOXP3 promoter, leading to up-regulation of FOXP3 expression and increased induced regulatory T (iTreg) cell stability and suppressive function. Promotes ability of mesenchymal stromal cells to suppress T-cell proliferation. Expands regulatory T-cells and induces cytotoxic T-cell apoptosis following virus infection. Activates ERK1/2 phosphorylation inducing cytokine (IL-6, IL-8, IL-12) and chemokine (CCL2) production in mast and dendritic cells. Inhibits degranulation and induces apoptosis of mast cells. Induces maturation and migration of dendritic cells. Inhibits natural killer (NK) cell function. Can transform NK cell phenotype from peripheral to decidual during pregnancy. Astrocyte derived galectin-9 enhances microglial TNF production. May play a role in thymocyte-epithelial interactions relevant to the biology of the thymus. May provide the molecular basis for urate flux across cell membranes, allowing urate that is formed during purine metabolism to efflux from cells and serving as an electrogenic transporter that plays an important role in renal and gastrointestinal urate excretion. Highly selective to the anion urate. This is Galectin-9 (Lgals9) from Rattus norvegicus (Rat).